Consider the following 277-residue polypeptide: MKYIGAHVSASGGVEFAPVNAHEIGANAFALFTKNQRQWVSKPLKEENIRLFKENCTKYNFQTDYILPHDSYLINLGHPEEEGLEKSRAAFLDEMQRCEQLGLKLLNFHPGSHLNKISIEDCLALIAESINLTLEKTKGVTAVIENTAGQGSNLGSEFWQLRYIIDRVNDKSRVGICLDTCHTYTAGYDIVNDYDKVFDEFEKEVGFEYLRGMHLNDSKKELGSHVDRHDNIGQGLIGSAFFERLMKDSRFDNMPLILETPDESKWAEEIAWLRSVE.

Residues His-69, His-109, Glu-145, Asp-179, His-182, His-214, Asp-227, His-229, and Glu-259 each coordinate Zn(2+).

The protein belongs to the AP endonuclease 2 family. Zn(2+) is required as a cofactor.

It carries out the reaction Endonucleolytic cleavage to 5'-phosphooligonucleotide end-products.. In terms of biological role, endonuclease IV plays a role in DNA repair. It cleaves phosphodiester bonds at apurinic or apyrimidinic (AP) sites, generating a 3'-hydroxyl group and a 5'-terminal sugar phosphate. This chain is Probable endonuclease 4, found in Bacteroides thetaiotaomicron (strain ATCC 29148 / DSM 2079 / JCM 5827 / CCUG 10774 / NCTC 10582 / VPI-5482 / E50).